A 603-amino-acid polypeptide reads, in one-letter code: DNA mismatch repair protein MutL (603 aa).

Belongs to the DNA mismatch repair MutL/HexB family.

Functionally, this protein is involved in the repair of mismatches in DNA. It is required for dam-dependent methyl-directed DNA mismatch repair. May act as a 'molecular matchmaker', a protein that promotes the formation of a stable complex between two or more DNA-binding proteins in an ATP-dependent manner without itself being part of a final effector complex. This chain is DNA mismatch repair protein MutL, found in Bradyrhizobium diazoefficiens (strain JCM 10833 / BCRC 13528 / IAM 13628 / NBRC 14792 / USDA 110).